The sequence spans 248 residues: Cytochrome c oxidase subunit 2 (248 aa).

Over 1 to 39 (MMKELLMNNMLNDVPTPWAMYFQDSATPNMEGIMELHNN) the chain is Mitochondrial intermembrane. Residues 40-56 (VVFYLIIMLCFVTYMLY) form a helical membrane-spanning segment. At 57 to 87 (NISTVYNKSAVAYKYMNHGQFIEMVWTTFPA) the chain is on the mitochondrial matrix side. Residues 88 to 104 (VMLLIMAFPSFMLLYIC) form a helical membrane-spanning segment. The Mitochondrial intermembrane segment spans residues 105-248 (DEVMAPAMTI…ADFLTWIDEQ (144 aa)). Residues His183, Cys218, Glu220, Cys222, His226, and Met229 each coordinate Cu cation. Residue Glu220 coordinates Mg(2+).

Belongs to the cytochrome c oxidase subunit 2 family. Component of the cytochrome c oxidase (complex IV, CIV), a multisubunit enzyme composed of a catalytic core of 3 subunits and several supernumerary subunits. The complex exists as a monomer or a dimer and forms supercomplexes (SCs) in the inner mitochondrial membrane with ubiquinol-cytochrome c oxidoreductase (cytochrome b-c1 complex, complex III, CIII). The cofactor is Cu cation.

It is found in the mitochondrion inner membrane. The catalysed reaction is 4 Fe(II)-[cytochrome c] + O2 + 8 H(+)(in) = 4 Fe(III)-[cytochrome c] + 2 H2O + 4 H(+)(out). Component of the cytochrome c oxidase, the last enzyme in the mitochondrial electron transport chain which drives oxidative phosphorylation. The respiratory chain contains 3 multisubunit complexes succinate dehydrogenase (complex II, CII), ubiquinol-cytochrome c oxidoreductase (cytochrome b-c1 complex, complex III, CIII) and cytochrome c oxidase (complex IV, CIV), that cooperate to transfer electrons derived from NADH and succinate to molecular oxygen, creating an electrochemical gradient over the inner membrane that drives transmembrane transport and the ATP synthase. Cytochrome c oxidase is the component of the respiratory chain that catalyzes the reduction of oxygen to water. Electrons originating from reduced cytochrome c in the intermembrane space (IMS) are transferred via the dinuclear copper A center (CU(A)) of subunit 2 and heme A of subunit 1 to the active site in subunit 1, a binuclear center (BNC) formed by heme A3 and copper B (CU(B)). The BNC reduces molecular oxygen to 2 water molecules using 4 electrons from cytochrome c in the IMS and 4 protons from the mitochondrial matrix. This is Cytochrome c oxidase subunit 2 (COX2) from Brettanomyces naardenensis (Yeast).